The primary structure comprises 210 residues: ATP-dependent Clp protease proteolytic subunit (210 aa).

Catalysis depends on Ser-106, which acts as the Nucleophile. His-131 is an active-site residue.

Belongs to the peptidase S14 family. Fourteen ClpP subunits assemble into 2 heptameric rings which stack back to back to give a disk-like structure with a central cavity, resembling the structure of eukaryotic proteasomes.

The protein resides in the cytoplasm. It carries out the reaction Hydrolysis of proteins to small peptides in the presence of ATP and magnesium. alpha-casein is the usual test substrate. In the absence of ATP, only oligopeptides shorter than five residues are hydrolyzed (such as succinyl-Leu-Tyr-|-NHMec, and Leu-Tyr-Leu-|-Tyr-Trp, in which cleavage of the -Tyr-|-Leu- and -Tyr-|-Trp bonds also occurs).. Its function is as follows. Cleaves peptides in various proteins in a process that requires ATP hydrolysis. Has a chymotrypsin-like activity. Plays a major role in the degradation of misfolded proteins. The sequence is that of ATP-dependent Clp protease proteolytic subunit from Azospirillum brasilense.